Here is a 251-residue protein sequence, read N- to C-terminus: Developmental protein SEPALLATA 1 (251 aa).

One can recognise an MADS-box domain in the interval 3–57 (RGRVELKRIENKINRQVTFAKRRNGLLKKAYELSVLCDAEVALIIFSNRGKLYEF). Positions 85 to 176 (AKELENSYRE…ALAMKLDDMI (92 aa)) form a coiled coil. Positions 88–178 (LENSYREYLK…AMKLDDMIGV (91 aa)) constitute a K-box domain.

Heterodimer with AGAMOUS capable of binding to CArG-box sequences. Interacts with AGL16. Interacts with TT16/AGL32. As to expression, expressed mainly in carpels, and weakly in stamens.

It localises to the nucleus. Functionally, probable transcription factor. Functions with SEPALLATA2/AGL4 and SEPALLATA3/AGL9 to ensure proper development of petals, stamens and carpels, and to prevent the indeterminate growth of the flower meristem. Forms a heterodimer via the K-box domain with AGAMOUS, that could be involved in genes regulation during floral meristem development. The protein is Developmental protein SEPALLATA 1 (SEP1) of Arabidopsis thaliana (Mouse-ear cress).